The chain runs to 413 residues: MEAGQDDAADRLTYEIFSILESKFLFGYGGGGGGETKSLQCAPPVSRGNRVCVLSVDGGARPEDGLLAAAALVRLEAAVQRRAGSKAARLADFFDVAAGSGAGGVLAAMLFARGPCGRPMYSADDALGFLLRRVRRRGWSSRAGGLLRRPAGAFHKVFGELTLRDTVRPVLVPCYDLATRAPFLFSRADAAQSPAYDFRLRDACAATCAPSGGGAAVEASSVDGVTRITAVGSGVALGNPTAAAITHVLNNRREFPAAAGVDNLLVISIGTGEAAGSSSRHRARTPVIARIAAEGASDMVDQAVAMAFGQHRTSNYVRIQGMGVARRRGGGVACGGETAEKAVWVAEAMLQQRNVEAVMFQGRRLAGETNAEKVERFARELIKEHGRRKQHVPPAASGGGGGGLDCHVSKKQP.

The PNPLA domain maps to 54 to 245 (LSVDGGARPE…ALGNPTAAAI (192 aa)). Residues 58–61 (GGAR) carry the GGXR motif. Residue S100 is the Nucleophile of the active site. Residues 384-413 (EHGRRKQHVPPAASGGGGGGLDCHVSKKQP) are disordered.

It belongs to the patatin family.

Functionally, possesses non-specific lipolytic acyl hydrolase (LAH) activity. Hydrolyzes phospholipids as well as galactolipids. May play a role in disease resistance. The sequence is that of Patatin-like protein 3 (PLP3) from Oryza sativa subsp. indica (Rice).